Here is a 248-residue protein sequence, read N- to C-terminus: Probable transcriptional regulatory protein Mpop_0922 (248 aa).

This sequence belongs to the TACO1 family.

The protein localises to the cytoplasm. In Methylorubrum populi (strain ATCC BAA-705 / NCIMB 13946 / BJ001) (Methylobacterium populi), this protein is Probable transcriptional regulatory protein Mpop_0922.